The primary structure comprises 285 residues: 4-diphosphocytidyl-2-C-methyl-D-erythritol kinase (285 aa).

Lys-9 is a catalytic residue. Residue Pro-89 to Ser-99 coordinates ATP. The active site involves Asp-131.

The protein belongs to the GHMP kinase family. IspE subfamily.

It carries out the reaction 4-CDP-2-C-methyl-D-erythritol + ATP = 4-CDP-2-C-methyl-D-erythritol 2-phosphate + ADP + H(+). It functions in the pathway isoprenoid biosynthesis; isopentenyl diphosphate biosynthesis via DXP pathway; isopentenyl diphosphate from 1-deoxy-D-xylulose 5-phosphate: step 3/6. Catalyzes the phosphorylation of the position 2 hydroxy group of 4-diphosphocytidyl-2C-methyl-D-erythritol. This Thermodesulfovibrio yellowstonii (strain ATCC 51303 / DSM 11347 / YP87) protein is 4-diphosphocytidyl-2-C-methyl-D-erythritol kinase.